Consider the following 1011-residue polypeptide: Protein translocase subunit SecA, chloroplastic (1011 aa).

The segment covering 1-17 (MATSSLCSSFTSQTCNP) has biased composition (polar residues). The tract at residues 1-22 (MATSSLCSSFTSQTCNPHSRPH) is disordered. The N-terminal 59 residues, 1-59 (MATSSLCSSFTSQTCNPHSRPHRKTLTLPGSVFLCRQFHLNSPSVSKTRRIRTRQSGPV), are a transit peptide targeting the chloroplast. 164–171 (MRTGEGKT) lines the ATP pocket. Positions 976 to 1011 (QDKMENQKSGKRNARPPTDTNPDPVGTVEPSTSASS) are disordered.

This sequence belongs to the SecA family.

It is found in the plastid. The protein localises to the chloroplast stroma. Its subcellular location is the chloroplast thylakoid membrane. The catalysed reaction is ATP + H2O + chloroplast-proteinSide 1 = ADP + phosphate + chloroplast-proteinSide 2.. Its function is as follows. Has a central role in coupling the hydrolysis of ATP to the transfer of proteins across the thylakoid membrane. Facilitates the transport of precursor proteins from the chloroplast stroma to thylakoid lumen. This chain is Protein translocase subunit SecA, chloroplastic, found in Pisum sativum (Garden pea).